A 418-amino-acid chain; its full sequence is Methionine aminopeptidase 2 (418 aa).

The disordered stretch occupies residues 18-49 (VSEPAAVDDSEVTEDATVQDKKKKKKKKKKKG). The span at 38–49 (KKKKKKKKKKKG) shows a compositional bias: basic residues. Position 172 (H172) interacts with substrate. Residues D192, D203, and H272 each coordinate a divalent metal cation. H280 serves as a coordination point for substrate. The a divalent metal cation site is built by E305 and E399.

Belongs to the peptidase M24A family. Methionine aminopeptidase eukaryotic type 2 subfamily. Requires Co(2+) as cofactor. Zn(2+) serves as cofactor. It depends on Mn(2+) as a cofactor. Fe(2+) is required as a cofactor.

Its subcellular location is the cytoplasm. It catalyses the reaction Release of N-terminal amino acids, preferentially methionine, from peptides and arylamides.. In terms of biological role, cotranslationally removes the N-terminal methionine from nascent proteins. The N-terminal methionine is often cleaved when the second residue in the primary sequence is small and uncharged (Met-Ala-, Cys, Gly, Pro, Ser, Thr, or Val). The chain is Methionine aminopeptidase 2 from Kluyveromyces lactis (strain ATCC 8585 / CBS 2359 / DSM 70799 / NBRC 1267 / NRRL Y-1140 / WM37) (Yeast).